The following is a 465-amino-acid chain: MEGKIISVNGPVVDIYFPNDVPHIYEALEVENPIKNEKLVLETRILFGENKVRAIALGSTEGISRGLTVKRTFHPISVPVSEEILGRVVNVFGEPIDGGEKIRGEVTPIIKNAAEFRRVQPSYSILETGIKAIDLLTPFPQGGKIGLFGGAGVGKTVLIMELIHNVAVAHGGISVFAGIGERSREGNELWLEMKESGVLSKAALVFGQMNEPPGVRMRVPLTALTIAEYFRDYLGKDVLLLMDNIFRYVQAGMEVSSMLGRIPSAVGYQPTLITELGEVEERILSTDTGSITAVQAVYVPADDLTDPAPATIFSHLDSTLVLSRSIAEMGIYPAVDPLASSSQILEPKFVGYEHAEVARKVVEILQHYESLKDIISILGVEELSEEDRIIVNRARKIQMFLSQPLFVASAYTNIPGVYVPREKTIEGFKAIIEGEVDDLPEDAFYMVGTLEDVKKKAEEHGALMY.

Glycine 149 to threonine 156 is a binding site for ATP.

Belongs to the ATPase alpha/beta chains family. As to quaternary structure, F-type ATPases have 2 components, CF(1) - the catalytic core - and CF(0) - the membrane proton channel. CF(1) has five subunits: alpha(3), beta(3), gamma(1), delta(1), epsilon(1). CF(0) has three main subunits: a(1), b(2) and c(9-12). The alpha and beta chains form an alternating ring which encloses part of the gamma chain. CF(1) is attached to CF(0) by a central stalk formed by the gamma and epsilon chains, while a peripheral stalk is formed by the delta and b chains.

It is found in the cell inner membrane. The catalysed reaction is ATP + H2O + 4 H(+)(in) = ADP + phosphate + 5 H(+)(out). Functionally, produces ATP from ADP in the presence of a proton gradient across the membrane. The catalytic sites are hosted primarily by the beta subunits. This chain is ATP synthase subunit beta, found in Dictyoglomus thermophilum (strain ATCC 35947 / DSM 3960 / H-6-12).